The sequence spans 58 residues: Succinate dehydrogenase subunit 8B, mitochondrial (58 aa).

Component of complex II composed of eight subunits in plants: four classical SDH subunits SDH1, SDH2, SDH3 and SDH4 (a flavoprotein (FP), an iron-sulfur protein (IP), and a cytochrome b composed of a large and a small subunit.), as well as four subunits unknown in mitochondria from bacteria and heterotrophic eukaryotes.

The protein localises to the mitochondrion inner membrane. It participates in carbohydrate metabolism; tricarboxylic acid cycle. This chain is Succinate dehydrogenase subunit 8B, mitochondrial, found in Oryza sativa subsp. japonica (Rice).